Consider the following 226-residue polypeptide: uncharacterized protein (226 aa).

The chain crosses the membrane as a helical span at residues 203–225; it reads FGISDIYTSTLSFGLIISLFYLL.

The protein resides in the membrane. This is an uncharacterized protein from Acanthamoeba polyphaga (Amoeba).